The primary structure comprises 255 residues: Phosphate import ATP-binding protein PstB (255 aa).

Residues 10 to 250 form the ABC transporter domain; it reads INIKDLNLWY…PQMKSTEDYI (241 aa). Position 42–49 (42–49) interacts with ATP; that stretch reads GPSGCGKS.

Belongs to the ABC transporter superfamily. Phosphate importer (TC 3.A.1.7) family. The complex is composed of two ATP-binding proteins (PstB), two transmembrane proteins (PstC and PstA) and a solute-binding protein (PstS).

Its subcellular location is the cell membrane. It carries out the reaction phosphate(out) + ATP + H2O = ADP + 2 phosphate(in) + H(+). Part of the ABC transporter complex PstSACB involved in phosphate import. Responsible for energy coupling to the transport system. The polypeptide is Phosphate import ATP-binding protein PstB (Methanococcoides burtonii (strain DSM 6242 / NBRC 107633 / OCM 468 / ACE-M)).